We begin with the raw amino-acid sequence, 364 residues long: Mitogen-activated protein kinase 11 (364 aa).

The Protein kinase domain occupies 24–308 (LQGLRPVGSG…AAEALAHAYF (285 aa)). Residues 30–38 (VGSGAYGSV) and Lys-53 each bind ATP. Residue Glu-71 coordinates nilotinib. Asp-150 acts as the Proton acceptor in catalysis. Thr-180 carries the post-translational modification Phosphothreonine; by MAP2K3, MAP2K4 and MAP2K6. The TXY signature appears at 180 to 182 (TGY). Tyr-182 is modified (phosphotyrosine; by MAP2K3, MAP2K4 and MAP2K6). Disordered stretches follow at residues 311-331 (YHDPEDEPEAEPYDESVEAKE) and 343-364 (QEVLSFKPPEPPKPPGSLEIEQ). Positions 314–326 (PEDEPEAEPYDES) are enriched in acidic residues. Tyr-323 is modified (phosphotyrosine; by ZAP70).

Belongs to the protein kinase superfamily. CMGC Ser/Thr protein kinase family. MAP kinase subfamily. In terms of assembly, interacts with HDAC3 and DUSP16. It depends on Mg(2+) as a cofactor. Dually phosphorylated on Thr-180 and Tyr-182 by MAP2K3/MKK3, MAP2K4/MKK4 and MAP2K6/MKK6, which activates the enzyme. In terms of tissue distribution, highest levels in the brain and heart. Also expressed in the placenta, lung, liver, skeletal muscle, kidney and pancreas.

It is found in the cytoplasm. The protein localises to the nucleus. The enzyme catalyses L-seryl-[protein] + ATP = O-phospho-L-seryl-[protein] + ADP + H(+). It carries out the reaction L-threonyl-[protein] + ATP = O-phospho-L-threonyl-[protein] + ADP + H(+). Its activity is regulated as follows. Activated by phosphorylation on threonine and tyrosine by MAP2K3/MKK3, MAP2K4/MKK4 and MAP2K6/MKK6. MAP2K3/MKK3 and MAP2K6/MKK6 are both essential for the activation of MAPK11 induced by environmental stress. HDAC3 interacts directly and selectively with MAPK11 to repress ATF2 transcriptional activity, and regulate TNF gene expression in LPS-stimulated cells. Inhibited by SB203580 and pyridinyl-imidazole related compounds. Functionally, serine/threonine kinase which acts as an essential component of the MAP kinase signal transduction pathway. MAPK11 is one of the four p38 MAPKs which play an important role in the cascades of cellular responses evoked by extracellular stimuli such as pro-inflammatory cytokines or physical stress leading to direct activation of transcription factors. Accordingly, p38 MAPKs phosphorylate a broad range of proteins and it has been estimated that they may have approximately 200 to 300 substrates each. MAPK11 functions are mostly redundant with those of MAPK14. Some of the targets are downstream kinases which are activated through phosphorylation and further phosphorylate additional targets. RPS6KA5/MSK1 and RPS6KA4/MSK2 can directly phosphorylate and activate transcription factors such as CREB1, ATF1, the NF-kappa-B isoform RELA/NFKB3, STAT1 and STAT3, but can also phosphorylate histone H3 and the nucleosomal protein HMGN1. RPS6KA5/MSK1 and RPS6KA4/MSK2 play important roles in the rapid induction of immediate-early genes in response to stress or mitogenic stimuli, either by inducing chromatin remodeling or by recruiting the transcription machinery. On the other hand, two other kinase targets, MAPKAPK2/MK2 and MAPKAPK3/MK3, participate in the control of gene expression mostly at the post-transcriptional level, by phosphorylating ZFP36 (tristetraprolin) and ELAVL1, and by regulating EEF2K, which is important for the elongation of mRNA during translation. MKNK1/MNK1 and MKNK2/MNK2, two other kinases activated by p38 MAPKs, regulate protein synthesis by phosphorylating the initiation factor EIF4E2. In the cytoplasm, the p38 MAPK pathway is an important regulator of protein turnover. For example, CFLAR is an inhibitor of TNF-induced apoptosis whose proteasome-mediated degradation is regulated by p38 MAPK phosphorylation. Ectodomain shedding of transmembrane proteins is regulated by p38 MAPKs as well. In response to inflammatory stimuli, p38 MAPKs phosphorylate the membrane-associated metalloprotease ADAM17. Such phosphorylation is required for ADAM17-mediated ectodomain shedding of TGF-alpha family ligands, which results in the activation of EGFR signaling and cell proliferation. Additional examples of p38 MAPK substrates are the FGFR1. FGFR1 can be translocated from the extracellular space into the cytosol and nucleus of target cells, and regulates processes such as rRNA synthesis and cell growth. FGFR1 translocation requires p38 MAPK activation. In the nucleus, many transcription factors are phosphorylated and activated by p38 MAPKs in response to different stimuli. Classical examples include ATF1, ATF2, ATF6, ELK1, PTPRH, DDIT3, TP53/p53 and MEF2C and MEF2A. The p38 MAPKs are emerging as important modulators of gene expression by regulating chromatin modifiers and remodelers. The promoters of several genes involved in the inflammatory response, such as IL6, IL8 and IL12B, display a p38 MAPK-dependent enrichment of histone H3 phosphorylation on 'Ser-10' (H3S10ph) in LPS-stimulated myeloid cells. This phosphorylation enhances the accessibility of the cryptic NF-kappa-B-binding sites marking promoters for increased NF-kappa-B recruitment. Phosphorylates NLRP1 downstream of MAP3K20/ZAK in response to UV-B irradiation and ribosome collisions, promoting activation of the NLRP1 inflammasome and pyroptosis. Phosphorylates methyltransferase DOT1L on 'Ser-834', 'Thr-900', 'Ser-902', 'Thr-984', 'Ser-1001', 'Ser-1009' and 'Ser-1104'. The sequence is that of Mitogen-activated protein kinase 11 (MAPK11) from Homo sapiens (Human).